A 394-amino-acid chain; its full sequence is Ribose-phosphate pyrophosphokinase 5, chloroplastic (394 aa).

Residues 1–33 (MASIVQPSPTFPALNLRRSSLIRPPSSVRFPLK) constitute a chloroplast transit peptide. 4 residues coordinate Mg(2+): D202, H204, D213, and D217. The segment at 288–303 (GKVAIMVDDMIDTAGT) is binding of phosphoribosylpyrophosphate.

It belongs to the ribose-phosphate pyrophosphokinase family.

It is found in the plastid. It localises to the chloroplast. The catalysed reaction is D-ribose 5-phosphate + ATP = 5-phospho-alpha-D-ribose 1-diphosphate + AMP + H(+). The chain is Ribose-phosphate pyrophosphokinase 5, chloroplastic (PRS5) from Arabidopsis thaliana (Mouse-ear cress).